A 402-amino-acid polypeptide reads, in one-letter code: Serine/threonine transporter SstT (402 aa).

8 helical membrane passes run 17 to 37, 44 to 64, 78 to 98, 138 to 158, 179 to 199, 212 to 232, 295 to 315, and 336 to 356; these read IAIGVVIGAILGLLIPKITVI, FVGGLKAIAPLLVSALVANAL, IIVLYLFGTFAAALTAVISHY, ALSQANYIGVLLWAVVFGFAM, IVRWIINLAPFGILGLVFDTI, VLILVLVGTMTFVALVINPII, MAGAAVTINVLTLAAVTTLGI, and ASGIAGGSLLLVPVACSLFGI.

The protein belongs to the dicarboxylate/amino acid:cation symporter (DAACS) (TC 2.A.23) family.

The protein resides in the cell membrane. It carries out the reaction L-serine(in) + Na(+)(in) = L-serine(out) + Na(+)(out). The enzyme catalyses L-threonine(in) + Na(+)(in) = L-threonine(out) + Na(+)(out). Functionally, involved in the import of serine and threonine into the cell, with the concomitant import of sodium (symport system). In Streptococcus thermophilus (strain CNRZ 1066), this protein is Serine/threonine transporter SstT.